The primary structure comprises 421 residues: 3-phosphoshikimate 1-carboxyvinyltransferase (421 aa).

Lysine 21, serine 22, and arginine 26 together coordinate 3-phosphoshikimate. Position 21 (lysine 21) interacts with phosphoenolpyruvate. The phosphoenolpyruvate site is built by glycine 93 and arginine 121. Residues serine 166, serine 167, glutamine 168, serine 194, aspartate 310, and lysine 337 each contribute to the 3-phosphoshikimate site. Residue glutamine 168 coordinates phosphoenolpyruvate. Residue aspartate 310 is the Proton acceptor of the active site. Phosphoenolpyruvate contacts are provided by arginine 341, arginine 382, and lysine 407.

Belongs to the EPSP synthase family. In terms of assembly, monomer.

Its subcellular location is the cytoplasm. It carries out the reaction 3-phosphoshikimate + phosphoenolpyruvate = 5-O-(1-carboxyvinyl)-3-phosphoshikimate + phosphate. Its pathway is metabolic intermediate biosynthesis; chorismate biosynthesis. In terms of biological role, catalyzes the transfer of the enolpyruvyl moiety of phosphoenolpyruvate (PEP) to the 5-hydroxyl of shikimate-3-phosphate (S3P) to produce enolpyruvyl shikimate-3-phosphate and inorganic phosphate. The polypeptide is 3-phosphoshikimate 1-carboxyvinyltransferase (Methanoregula boonei (strain DSM 21154 / JCM 14090 / 6A8)).